A 367-amino-acid chain; its full sequence is Nodulation protein 10 (367 aa).

Helical transmembrane passes span 15-37, 46-66, 88-108, 109-129, 155-175, 183-203, 208-228, 245-265, 270-290, 312-332, and 335-355; these read FDLL…WLHL, VFDL…SGFL, IFPA…VTGG, LNVT…LTAA, VLWT…LLEI, GALV…HFNI, NPFL…GVLA, WWLA…AAFI, AAPV…SAAH, MLVM…LWIV, and VGTV…AMKL.

It belongs to the acyltransferase 3 family.

The protein localises to the cell membrane. In terms of biological role, not known. NodX allows Rhizobium leguminosarum biovar viciae strain TOM to nodulate Afghanistan peas. The chain is Nodulation protein 10 (nodX) from Rhizobium leguminosarum bv. viciae.